The primary structure comprises 221 residues: MNKGQYFWNELWCEGRISFHKEEVNPDLIAYISSLNIPAKGRVLVPLCGKSVDMLWLVRQGYHVVGIELVEKAILQFVQEHQITVRENTTGQAKQYFTDNLNLWITDIFALNAALIEPVDAIYDRAALVALPKKLRPAYVDICLKWLKPGGSILLKTLQYNQEKVQGPPYSVSPEEIALSYQQCAKIELLKSQKRIREPNDHLFNLGISEVNDYVWRIRKG.

Trp-12, Leu-47, Glu-68, and Arg-125 together coordinate S-adenosyl-L-methionine.

The protein belongs to the class I-like SAM-binding methyltransferase superfamily. TPMT family.

The protein localises to the cytoplasm. It carries out the reaction S-adenosyl-L-methionine + a thiopurine = S-adenosyl-L-homocysteine + a thiopurine S-methylether.. The protein is Thiopurine S-methyltransferase of Legionella pneumophila subsp. pneumophila (strain Philadelphia 1 / ATCC 33152 / DSM 7513).